The sequence spans 458 residues: Argininosuccinate lyase (458 aa).

It belongs to the lyase 1 family. Argininosuccinate lyase subfamily.

The protein resides in the cytoplasm. The enzyme catalyses 2-(N(omega)-L-arginino)succinate = fumarate + L-arginine. It functions in the pathway amino-acid biosynthesis; L-arginine biosynthesis; L-arginine from L-ornithine and carbamoyl phosphate: step 3/3. This Pseudoalteromonas atlantica (strain T6c / ATCC BAA-1087) protein is Argininosuccinate lyase.